Reading from the N-terminus, the 103-residue chain is N(4)-acetylcytidine amidohydrolase (103 aa).

The ASCH domain maps to 6-100; sequence ITFFQRFQDD…GESQFYVIEF (95 aa). Lysine 21 serves as the catalytic Proton acceptor. Catalysis depends on threonine 24, which acts as the Nucleophile. The active-site Proton donor is glutamate 74.

It belongs to the N(4)-acetylcytidine amidohydrolase family.

The catalysed reaction is N(4)-acetylcytidine + H2O = cytidine + acetate + H(+). It carries out the reaction N(4)-acetyl-2'-deoxycytidine + H2O = 2'-deoxycytidine + acetate + H(+). It catalyses the reaction N(4)-acetylcytosine + H2O = cytosine + acetate + H(+). Catalyzes the hydrolysis of N(4)-acetylcytidine (ac4C). This Klebsiella pneumoniae subsp. pneumoniae (strain ATCC 700721 / MGH 78578) protein is N(4)-acetylcytidine amidohydrolase.